Consider the following 316-residue polypeptide: Homoserine kinase (316 aa).

97–107 is an ATP binding site; that stretch reads PHSRGLGSSAA.

The protein belongs to the GHMP kinase family. Homoserine kinase subfamily.

The protein localises to the cytoplasm. The enzyme catalyses L-homoserine + ATP = O-phospho-L-homoserine + ADP + H(+). Its pathway is amino-acid biosynthesis; L-threonine biosynthesis; L-threonine from L-aspartate: step 4/5. Catalyzes the ATP-dependent phosphorylation of L-homoserine to L-homoserine phosphate. This is Homoserine kinase from Mycobacterium tuberculosis (strain ATCC 25618 / H37Rv).